The primary structure comprises 269 residues: NAD kinase (269 aa).

Asp62 functions as the Proton acceptor in the catalytic mechanism. NAD(+) is bound by residues 62–63 (DG), 130–131 (NE), Lys141, Arg158, Asp160, 171–176 (TAYAMS), Ala195, and Gln229.

It belongs to the NAD kinase family. Requires a divalent metal cation as cofactor.

It localises to the cytoplasm. It carries out the reaction NAD(+) + ATP = ADP + NADP(+) + H(+). Its function is as follows. Involved in the regulation of the intracellular balance of NAD and NADP, and is a key enzyme in the biosynthesis of NADP. Catalyzes specifically the phosphorylation on 2'-hydroxyl of the adenosine moiety of NAD to yield NADP. The chain is NAD kinase from Methanospirillum hungatei JF-1 (strain ATCC 27890 / DSM 864 / NBRC 100397 / JF-1).